A 60-amino-acid polypeptide reads, in one-letter code: Cytotoxin 5 (60 aa).

Disulfide bonds link C3/C21, C14/C38, C42/C53, and C54/C59.

It belongs to the three-finger toxin family. Short-chain subfamily. Type IA cytotoxin sub-subfamily. In terms of assembly, monomer in solution; Homodimer and oligomer in the presence of negatively charged lipids forming a pore with a size ranging between 20 and 30 Angstroms. Expressed by the venom gland.

It localises to the secreted. Its subcellular location is the target cell membrane. Functionally, shows cytolytic activity on many different cells by forming pore in lipid membranes. In vivo, increases heart rate or kills the animal by cardiac arrest. In addition, it binds to heparin with high affinity, interacts with Kv channel-interacting protein 1 (KCNIP1) in a calcium-independent manner, and binds to integrin alpha-V/beta-3 (ITGAV/ITGB3) with moderate affinity. The polypeptide is Cytotoxin 5 (Naja haje haje (Egyptian cobra)).